Reading from the N-terminus, the 203-residue chain is Holliday junction branch migration complex subunit RuvA (203 aa).

The interval 1 to 63 (MYEYLKGLVT…DTDITLFGFY (63 aa)) is domain I. Positions 64–142 (DLDEKQLFQK…DLEQSATLVG (79 aa)) are domain II. The interval 143–153 (QTAIDLGSQGD) is flexible linker. A domain III region spans residues 153 to 203 (DSPELSDALAALSALGYSAREVKAITPKLTDFAAQTTDQYLREGLRLLMKK).

Belongs to the RuvA family. Homotetramer. Forms an RuvA(8)-RuvB(12)-Holliday junction (HJ) complex. HJ DNA is sandwiched between 2 RuvA tetramers; dsDNA enters through RuvA and exits via RuvB. An RuvB hexamer assembles on each DNA strand where it exits the tetramer. Each RuvB hexamer is contacted by two RuvA subunits (via domain III) on 2 adjacent RuvB subunits; this complex drives branch migration. In the full resolvosome a probable DNA-RuvA(4)-RuvB(12)-RuvC(2) complex forms which resolves the HJ.

The protein resides in the cytoplasm. Its function is as follows. The RuvA-RuvB-RuvC complex processes Holliday junction (HJ) DNA during genetic recombination and DNA repair, while the RuvA-RuvB complex plays an important role in the rescue of blocked DNA replication forks via replication fork reversal (RFR). RuvA specifically binds to HJ cruciform DNA, conferring on it an open structure. The RuvB hexamer acts as an ATP-dependent pump, pulling dsDNA into and through the RuvAB complex. HJ branch migration allows RuvC to scan DNA until it finds its consensus sequence, where it cleaves and resolves the cruciform DNA. This chain is Holliday junction branch migration complex subunit RuvA, found in Latilactobacillus sakei subsp. sakei (strain 23K) (Lactobacillus sakei subsp. sakei).